We begin with the raw amino-acid sequence, 284 residues long: RNase adapter protein RapZ (284 aa).

Position 8–15 (8–15 (GRSGSGKS)) interacts with ATP. 56–59 (DVRN) contacts GTP. The RNA-binding stretch occupies residues 266 to 284 (RSRGKNVQSRHRTLEKRRS).

This sequence belongs to the RapZ-like family. RapZ subfamily. Homotrimer.

In terms of biological role, modulates the synthesis of GlmS, by affecting the processing and stability of the regulatory small RNA GlmZ. When glucosamine-6-phosphate (GlcN6P) concentrations are high in the cell, RapZ binds GlmZ and targets it to cleavage by RNase E. Consequently, GlmZ is inactivated and unable to activate GlmS synthesis. Under low GlcN6P concentrations, RapZ is sequestered and inactivated by an other regulatory small RNA, GlmY, preventing GlmZ degradation and leading to synthesis of GlmS. The chain is RNase adapter protein RapZ from Erwinia tasmaniensis (strain DSM 17950 / CFBP 7177 / CIP 109463 / NCPPB 4357 / Et1/99).